Reading from the N-terminus, the 1505-residue chain is Synaptonemal complex protein 2 (1505 aa).

Residues 439–483 are disordered; the sequence is EKSNLQKKLTNPLEPDNSSSQRDRKNSQDEITTPSRKKMSEASMI. Phosphoserine occurs at positions 457 and 465. Residue Thr-471 is modified to Phosphothreonine. The residue at position 494 (Ser-494) is a Phosphoserine. Thr-503 is subject to Phosphothreonine. 4 positions are modified to phosphoserine: Ser-507, Ser-516, Ser-525, and Ser-534. The segment at 536-571 is disordered; it reads KSRQSDGRNRGNNRANHNKTATVQNKGHEHHESPDQ. Phosphothreonine is present on residues Thr-613 and Thr-638. 3 positions are modified to phosphoserine: Ser-651, Ser-655, and Ser-746. Positions 745–764 are disordered; that stretch reads KSPSRKSMRSHTKSRKELMS. A compositionally biased stretch (basic residues) spans 748–758; that stretch reads SRKSMRSHTKS. Ser-920 carries the phosphoserine modification. Position 922 is a phosphothreonine (Thr-922). 2 disordered regions span residues 949 to 974 and 1035 to 1080; these read YSRN…QPRS and KEET…NGRE. Over residues 953–962 the composition is skewed to basic residues; the sequence is KNTKKCKSIK. 8 positions are modified to phosphoserine: Ser-1121, Ser-1123, Ser-1130, Ser-1146, Ser-1150, Ser-1162, Ser-1165, and Ser-1170. Residue Thr-1174 is modified to Phosphothreonine. At Ser-1188 the chain carries Phosphoserine. The disordered stretch occupies residues 1199–1239; it reads NSYSDVSSNSSEKLYMEPESPDSCENHVQSKREENHAASPF. Low complexity predominate over residues 1200–1209; the sequence is SYSDVSSNSS. 2 positions are modified to phosphoserine: Ser-1218 and Ser-1221. Over residues 1222-1234 the composition is skewed to basic and acidic residues; sequence CENHVQSKREENH. 3 positions are modified to phosphoserine: Ser-1237, Ser-1280, and Ser-1283. Thr-1318 is modified (phosphothreonine). Residues 1384–1435 adopt a coiled-coil conformation; it reads ENIDKFQVTLLDELEKVEKDSQTLRDLEKEFVDIEEKIVHKMRAFHQSERER.

It belongs to the SYCP2 family. Component of the lateral elements of synaptonemal complexes. Interacts with TEX11. Heterodimer with SYCP3. Interacts with SYCP3, SMC1A and SMC3. Post-translationally, phosphorylated. Detected in spermatocytes and testis (at protein level). Spermatocytes and oocytes. Meiotic prophase cells.

The protein localises to the nucleus. The protein resides in the chromosome. Functionally, major component of the axial/lateral elements of synaptonemal complexes (SCS) during meiotic prophase. Plays a role in the assembly of synaptonemal complexes. Required for normal meiotic chromosome synapsis during oocyte and spermatocyte development and for normal male and female fertility. Required for insertion of SYCP3 into synaptonemal complexes. May be involved in the organization of chromatin by temporarily binding to DNA scaffold attachment regions. Requires SYCP3, but not SYCP1, in order to be incorporated into the axial/lateral elements. The polypeptide is Synaptonemal complex protein 2 (Sycp2) (Rattus norvegicus (Rat)).